Reading from the N-terminus, the 392-residue chain is Phosphopentomutase (392 aa).

Residues D14, D286, H291, D327, H328, and H339 each coordinate Mn(2+).

The protein belongs to the phosphopentomutase family. It depends on Mn(2+) as a cofactor.

The protein localises to the cytoplasm. The enzyme catalyses 2-deoxy-alpha-D-ribose 1-phosphate = 2-deoxy-D-ribose 5-phosphate. It carries out the reaction alpha-D-ribose 1-phosphate = D-ribose 5-phosphate. It functions in the pathway carbohydrate degradation; 2-deoxy-D-ribose 1-phosphate degradation; D-glyceraldehyde 3-phosphate and acetaldehyde from 2-deoxy-alpha-D-ribose 1-phosphate: step 1/2. Its function is as follows. Isomerase that catalyzes the conversion of deoxy-ribose 1-phosphate (dRib-1-P) and ribose 1-phosphate (Rib-1-P) to deoxy-ribose 5-phosphate (dRib-5-P) and ribose 5-phosphate (Rib-5-P), respectively. The chain is Phosphopentomutase from Staphylococcus aureus (strain Mu3 / ATCC 700698).